Reading from the N-terminus, the 505-residue chain is Lysine--tRNA ligase (505 aa).

The Mg(2+) site is built by glutamate 415 and glutamate 422.

Belongs to the class-II aminoacyl-tRNA synthetase family. As to quaternary structure, homodimer. Mg(2+) serves as cofactor.

Its subcellular location is the cytoplasm. It catalyses the reaction tRNA(Lys) + L-lysine + ATP = L-lysyl-tRNA(Lys) + AMP + diphosphate. The chain is Lysine--tRNA ligase from Citrobacter koseri (strain ATCC BAA-895 / CDC 4225-83 / SGSC4696).